A 435-amino-acid polypeptide reads, in one-letter code: D-inositol 3-phosphate glycosyltransferase (435 aa).

H25 is a 1D-myo-inositol 3-phosphate binding site. UDP-N-acetyl-alpha-D-glucosamine-binding positions include 31–32 and G39; that span reads QP. 1D-myo-inositol 3-phosphate is bound by residues 36–41, K94, Y127, T151, and R171; that span reads DAGGMN. UDP-N-acetyl-alpha-D-glucosamine is bound by residues R245 and K250. Mg(2+) contacts are provided by Y320, R321, and A323. Positions 333 and 341 each coordinate UDP-N-acetyl-alpha-D-glucosamine. T347 is a binding site for Mg(2+).

This sequence belongs to the glycosyltransferase group 1 family. MshA subfamily. In terms of assembly, homodimer.

It catalyses the reaction 1D-myo-inositol 3-phosphate + UDP-N-acetyl-alpha-D-glucosamine = 1D-myo-inositol 2-acetamido-2-deoxy-alpha-D-glucopyranoside 3-phosphate + UDP + H(+). Catalyzes the transfer of a N-acetyl-glucosamine moiety to 1D-myo-inositol 3-phosphate to produce 1D-myo-inositol 2-acetamido-2-deoxy-glucopyranoside 3-phosphate in the mycothiol biosynthesis pathway. This is D-inositol 3-phosphate glycosyltransferase from Streptosporangium roseum (strain ATCC 12428 / DSM 43021 / JCM 3005 / KCTC 9067 / NCIMB 10171 / NRRL 2505 / NI 9100).